We begin with the raw amino-acid sequence, 142 residues long: Large ribosomal subunit protein uL11 (142 aa).

The protein belongs to the universal ribosomal protein uL11 family. In terms of assembly, part of the ribosomal stalk of the 50S ribosomal subunit. Interacts with L10 and the large rRNA to form the base of the stalk. L10 forms an elongated spine to which L12 dimers bind in a sequential fashion forming a multimeric L10(L12)X complex. Post-translationally, one or more lysine residues are methylated.

Functionally, forms part of the ribosomal stalk which helps the ribosome interact with GTP-bound translation factors. In Shigella boydii serotype 18 (strain CDC 3083-94 / BS512), this protein is Large ribosomal subunit protein uL11.